A 533-amino-acid chain; its full sequence is Beta-glucosidase 22 (533 aa).

Positions 1 to 24 (MAVSSSTSTCSSFSLLLLLLLLAA) are cleaved as a signal peptide. N-linked (GlcNAc...) asparagine glycosylation is present at asparagine 41. A beta-D-glucoside is bound by residues glutamine 61, histidine 161, and 206–207 (DE). Catalysis depends on glutamate 207, which acts as the Proton donor. A disulfide bridge connects residues cysteine 226 and cysteine 234. Residues asparagine 233 and asparagine 238 are each glycosylated (N-linked (GlcNAc...) asparagine). A beta-D-glucoside contacts are provided by tyrosine 350 and glutamate 421. Residue glutamate 421 is the Nucleophile of the active site. The N-linked (GlcNAc...) asparagine glycan is linked to asparagine 435. A beta-D-glucoside-binding residues include tryptophan 466 and phenylalanine 482.

Belongs to the glycosyl hydrolase 1 family.

It catalyses the reaction Hydrolysis of terminal, non-reducing beta-D-glucosyl residues with release of beta-D-glucose.. The protein is Beta-glucosidase 22 (BGLU22) of Oryza sativa subsp. japonica (Rice).